Here is a 150-residue protein sequence, read N- to C-terminus: Ribosome maturation factor RimP (150 aa).

The protein belongs to the RimP family.

It is found in the cytoplasm. Required for maturation of 30S ribosomal subunits. This Escherichia coli O9:H4 (strain HS) protein is Ribosome maturation factor RimP.